The primary structure comprises 238 residues: 7-cyano-7-deazaguanine synthase (238 aa).

An ATP-binding site is contributed by 15-25 (FSGGQDSTTCL). 4 residues coordinate Zn(2+): Cys-203, Cys-218, Cys-221, and Cys-224.

This sequence belongs to the QueC family. Zn(2+) serves as cofactor.

It catalyses the reaction 7-carboxy-7-deazaguanine + NH4(+) + ATP = 7-cyano-7-deazaguanine + ADP + phosphate + H2O + H(+). The protein operates within purine metabolism; 7-cyano-7-deazaguanine biosynthesis. Its function is as follows. Catalyzes the ATP-dependent conversion of 7-carboxy-7-deazaguanine (CDG) to 7-cyano-7-deazaguanine (preQ(0)). The sequence is that of 7-cyano-7-deazaguanine synthase from Alkalilimnicola ehrlichii (strain ATCC BAA-1101 / DSM 17681 / MLHE-1).